The primary structure comprises 186 residues: Probable GTP-binding protein EngB (186 aa).

Residues 18–186 form the EngB-type G domain; the sequence is DKKEICFIGR…LKKLIGSVIL (169 aa). GTP contacts are provided by residues 26-33, 52-56, 69-72, 135-138, and 166-168; these read GRSNVGKS, GRTQL, DLPG, NKAD, and VSA. S33 and T54 together coordinate Mg(2+).

It belongs to the TRAFAC class TrmE-Era-EngA-EngB-Septin-like GTPase superfamily. EngB GTPase family. Mg(2+) serves as cofactor.

Its function is as follows. Necessary for normal cell division and for the maintenance of normal septation. The chain is Probable GTP-binding protein EngB from Malacoplasma penetrans (strain HF-2) (Mycoplasma penetrans).